The following is a 452-amino-acid chain: 1-aminocyclopropane-1-carboxylate synthase 3 (452 aa).

Position 283 is an N6-(pyridoxal phosphate)lysine (Lys-283).

Belongs to the class-I pyridoxal-phosphate-dependent aminotransferase family. Requires pyridoxal 5'-phosphate as cofactor. Expressed in leaves. Expressed in roots and leaf blades. Expressed at low levels in leaf sheaths and shoot bases.

It carries out the reaction S-adenosyl-L-methionine = 1-aminocyclopropane-1-carboxylate + S-methyl-5'-thioadenosine + H(+). It participates in alkene biosynthesis; ethylene biosynthesis via S-adenosyl-L-methionine; ethylene from S-adenosyl-L-methionine: step 1/2. Functionally, catalyzes the formation of 1-aminocyclopropane-1-carboxylate, a direct precursor of ethylene in higher plants. This is 1-aminocyclopropane-1-carboxylate synthase 3 from Oryza sativa subsp. japonica (Rice).